The sequence spans 247 residues: OCIA domain-containing protein 1 (247 aa).

Residues M1–E112 enclose the OCIA domain. S108, S116, and S123 each carry phosphoserine. Disordered regions lie at residues A113–I153 and S167–R230. 2 stretches are compositionally biased toward polar residues: residues S136–T146 and A168–G177. 2 stretches are compositionally biased toward basic and acidic residues: residues E192–E210 and H218–R230. The residue at position 193 (S193) is a Phosphoserine.

It belongs to the OCIAD1 family. Interacts with OCIAD2. Interacts with STAT3. As to expression, expressed at high levels in the brain and at lower levels in the heart, ovary, testis and kidney. Expression is strongest in embryonic stem cells and in the blood vessels.

It localises to the endosome. Maintains stem cell potency. Increases STAT3 phosphorylation and controls ERK phosphorylation. May act as a scaffold, increasing STAT3 recruitment onto endosomes. This is OCIA domain-containing protein 1 from Mus musculus (Mouse).